Here is a 210-residue protein sequence, read N- to C-terminus: Ribosomal RNA large subunit methyltransferase E (210 aa).

S-adenosyl-L-methionine-binding residues include Gly60, Trp62, Asp80, Asp96, and Asp122. Residue Lys162 is the Proton acceptor of the active site.

It belongs to the class I-like SAM-binding methyltransferase superfamily. RNA methyltransferase RlmE family.

Its subcellular location is the cytoplasm. It carries out the reaction uridine(2552) in 23S rRNA + S-adenosyl-L-methionine = 2'-O-methyluridine(2552) in 23S rRNA + S-adenosyl-L-homocysteine + H(+). In terms of biological role, specifically methylates the uridine in position 2552 of 23S rRNA at the 2'-O position of the ribose in the fully assembled 50S ribosomal subunit. The protein is Ribosomal RNA large subunit methyltransferase E of Dichelobacter nodosus (strain VCS1703A).